The sequence spans 796 residues: Peroxisome proliferator-activated receptor gamma coactivator 1-alpha (796 aa).

Lysine 77 carries the N6-acetyllysine modification. The tract at residues 98–138 (PVDEDGLPSFDALTDGDVTTENEASPSSMPDGTPPPQEAEE) is disordered. Positions 114-127 (DVTTENEASPSSMP) are enriched in polar residues. Positions 142–146 (LKKLL) match the LXXLL motif motif. Lysine 144 carries the post-translational modification N6-acetyllysine. Threonine 176 carries the post-translational modification Phosphothreonine; by AMPK. Lysine 182 bears the N6-acetyllysine mark. The disordered stretch occupies residues 211-274 (YLTTNDDPPH…PNDPKGSPFE (64 aa)). The segment covering 217-235 (DPPHTKPTETRNSSRDKCT) has biased composition (basic and acidic residues). Positions 242–258 (TQSQSQHLQAKPTSLSL) are enriched in polar residues. Lysine 252, lysine 269, lysine 276, and lysine 319 each carry N6-acetyllysine. Residues 288-349 (GTAGLTPPTT…NNSTKKGPEQ (62 aa)) are disordered. An interaction with PPARG region spans residues 291–337 (GLTPPTTPPHKANQDNPFRASPKLKPPCKTVVPPPSKKTRYSESSGT). A compositionally biased stretch (polar residues) spans 332–344 (SESSGTHGNNSTK). N6-acetyllysine occurs at positions 345, 411, and 449. The mediates interaction with RNF34 stretch occupies residues 348 to 796 (EQSELYAQLS…LKEAQRSLRR (449 aa)). Residues 463-487 (HFGHPSQAVFDDEADKTSELRDSDF) are disordered. The span at 477 to 486 (DKTSELRDSD) shows a compositional bias: basic and acidic residues. Serine 537 bears the Phosphoserine; by AMPK mark. Disordered stretches follow at residues 541-637 (FNSP…SYEE) and 648-667 (YRRE…ERQR). Residues 568–603 (RSFSQHRSCSRSPYSRSRSRSPGSRSSSRSCYYSES) show a composition bias toward low complexity. The span at 620–629 (SRSRSPYSRR) shows a compositional bias: basic residues. The RRM domain maps to 675-751 (RVIYVGKIRP…TDFELYFCGR (77 aa)). Residues lysine 756 and lysine 777 each carry the N6-acetyllysine modification.

Homooligomer. Interacts with MYBBP1A; inhibits MYBBP1A transcriptional activation. Interacts with PRDM16, LPIN1 and PML. Interacts (via LXXLL motif) with RORA and RORC (via AF-2 motif); activates RORA and RORC transcriptional activation. Interacts with LRPPRC. Interacts with FOXO1. Interacts with NR5A2. Phosphorylation by AMPK in skeletal muscle increases activation of its own promoter. Phosphorylated by CLK2. Post-translationally, heavily acetylated by KAT2A/GCN5 under conditions of high nutrients, leading to inactivation of PPARGC1A. Deacetylated by SIRT1 in low nutrients/high NAD conditions, leading to its activation. In terms of processing, ubiquitinated. Ubiquitination by RNF34 induces proteasomal degradation.

It localises to the nucleus. The protein localises to the PML body. Its function is as follows. Transcriptional coactivator for steroid receptors and nuclear receptors. Greatly increases the transcriptional activity of PPARG and thyroid hormone receptor on the uncoupling protein promoter. Can regulate key mitochondrial genes that contribute to the program of adaptive thermogenesis. Plays an essential role in metabolic reprogramming in response to dietary availability through coordination of the expression of a wide array of genes involved in glucose and fatty acid metabolism. Acts as a key regulator of gluconeogenesis: stimulates hepatic gluconeogenesis by increasing the expression of gluconeogenic enzymes, and acting together with FOXO1 to promote the fasting gluconeogenic program. Induces the expression of PERM1 in the skeletal muscle in an ESRRA-dependent manner. Also involved in the integration of the circadian rhythms and energy metabolism. Required for oscillatory expression of clock genes, such as BMAL1 and NR1D1, through the coactivation of RORA and RORC, and metabolic genes, such as PDK4 and PEPCK. The protein is Peroxisome proliferator-activated receptor gamma coactivator 1-alpha (PPARGC1A) of Sus scrofa (Pig).